Here is a 132-residue protein sequence, read N- to C-terminus: uncharacterized protein (132 aa).

A helical transmembrane segment spans residues 105–125 (VHGYVVFWLSILCILIIIFVY).

The protein localises to the membrane. This is an uncharacterized protein from Methanocaldococcus jannaschii (strain ATCC 43067 / DSM 2661 / JAL-1 / JCM 10045 / NBRC 100440) (Methanococcus jannaschii).